Reading from the N-terminus, the 340-residue chain is uncharacterized protein (340 aa).

The RING-CH-type zinc-finger motif lies at 6–70 (KYEKSSARCW…PQCLTAYRIA (65 aa)). C14, C17, C37, C39, H44, C47, C60, and C63 together coordinate Zn(2+). The next 3 helical transmembrane spans lie at 249–269 (EFWI…TKIL), 274–294 (PILL…GNFT), and 300–320 (IIGA…FIAW).

It localises to the membrane. This is an uncharacterized protein from Schizosaccharomyces pombe (strain 972 / ATCC 24843) (Fission yeast).